We begin with the raw amino-acid sequence, 551 residues long: uncharacterized protein (551 aa).

A run of 6 helical transmembrane segments spans residues 1–21, 25–45, 99–119, 124–144, 266–286, and 490–510; these read MIAY…IVNS, WTYF…LMVS, GALF…FGFN, LGVL…SLMW, FAFL…GVFY, and FLDL…SAED.

The protein resides in the cell membrane. This is an uncharacterized protein from Haemophilus influenzae (strain ATCC 51907 / DSM 11121 / KW20 / Rd).